Reading from the N-terminus, the 265-residue chain is uncharacterized protein (265 aa).

A divalent metal cation contacts are provided by His7, His9, Glu95, His131, His156, and Asp206.

It belongs to the metallo-dependent hydrolases superfamily. TatD-type hydrolase family. The cofactor is a divalent metal cation.

This is an uncharacterized protein from Buchnera aphidicola subsp. Baizongia pistaciae (strain Bp).